The primary structure comprises 251 residues: 1-(5-phosphoribosyl)-5-[(5-phosphoribosylamino)methylideneamino] imidazole-4-carboxamide isomerase (251 aa).

The Proton acceptor role is filled by Asp8. Asp131 functions as the Proton donor in the catalytic mechanism.

This sequence belongs to the HisA/HisF family.

The protein localises to the cytoplasm. The enzyme catalyses 1-(5-phospho-beta-D-ribosyl)-5-[(5-phospho-beta-D-ribosylamino)methylideneamino]imidazole-4-carboxamide = 5-[(5-phospho-1-deoxy-D-ribulos-1-ylimino)methylamino]-1-(5-phospho-beta-D-ribosyl)imidazole-4-carboxamide. Its pathway is amino-acid biosynthesis; L-histidine biosynthesis; L-histidine from 5-phospho-alpha-D-ribose 1-diphosphate: step 4/9. The sequence is that of 1-(5-phosphoribosyl)-5-[(5-phosphoribosylamino)methylideneamino] imidazole-4-carboxamide isomerase from Burkholderia pseudomallei (strain 1710b).